Reading from the N-terminus, the 309-residue chain is Glutaminase (309 aa).

Residues Ser-64, Asn-114, Glu-160, Asn-167, Tyr-191, Tyr-243, and Val-261 each coordinate substrate.

It belongs to the glutaminase family. Homotetramer.

It catalyses the reaction L-glutamine + H2O = L-glutamate + NH4(+). The chain is Glutaminase from Rhizobium johnstonii (strain DSM 114642 / LMG 32736 / 3841) (Rhizobium leguminosarum bv. viciae).